The primary structure comprises 228 residues: Ankyrin repeat domain-containing protein 46 (228 aa).

ANK repeat units follow at residues 11-40, 44-73, 77-103, and 107-138; these read QTNV…DPNI, RGRT…DLLA, QGNT…KIDI, and QGAT…EVKG. The helical transmembrane segment at 195–215 threads the bilayer; sequence VLLLIFVIALLSLGIAYYVSG.

It localises to the membrane. This Pongo abelii (Sumatran orangutan) protein is Ankyrin repeat domain-containing protein 46 (ANKRD46).